The sequence spans 113 residues: Nascent polypeptide-associated complex protein (113 aa).

Residues Gly-5 to Ile-73 form the NAC-A/B domain.

This sequence belongs to the NAC-alpha family. As to quaternary structure, homodimer. Interacts with the ribosome. Binds ribosomal RNA.

Functionally, contacts the emerging nascent chain on the ribosome. This Methanosarcina acetivorans (strain ATCC 35395 / DSM 2834 / JCM 12185 / C2A) protein is Nascent polypeptide-associated complex protein.